We begin with the raw amino-acid sequence, 179 residues long: Orotate phosphoribosyltransferase (179 aa).

Residues Arg-94, Lys-95, Lys-98, His-100, and 120-128 (EDTSTTGNS) contribute to the 5-phospho-alpha-D-ribose 1-diphosphate site. Residues Thr-124 and Arg-152 each contribute to the orotate site.

It belongs to the purine/pyrimidine phosphoribosyltransferase family. PyrE subfamily. Homodimer. It depends on Mg(2+) as a cofactor.

It catalyses the reaction orotidine 5'-phosphate + diphosphate = orotate + 5-phospho-alpha-D-ribose 1-diphosphate. It functions in the pathway pyrimidine metabolism; UMP biosynthesis via de novo pathway; UMP from orotate: step 1/2. Functionally, catalyzes the transfer of a ribosyl phosphate group from 5-phosphoribose 1-diphosphate to orotate, leading to the formation of orotidine monophosphate (OMP). This chain is Orotate phosphoribosyltransferase, found in Mycobacterium bovis (strain ATCC BAA-935 / AF2122/97).